We begin with the raw amino-acid sequence, 534 residues long: NAD(P)H-quinone oxidoreductase subunit 2 (534 aa).

A run of 14 helical transmembrane segments spans residues 15-35 (ILPEGIVILTLLGVLIVDLIL), 42-62 (WIGYLAIAGLFTSIVALYFQW), 79-99 (LSIVFRGIIALSAAVTILMSI), 109-129 (LAEFIAILLSATLGGMFLSGA), 132-152 (LVMIFISLETLSISSYLLTGY), 167-187 (LLIGASSTAVFLYGVSLLYGL), 210-230 (LGLVIALVFAIAGIGFKISAA), 244-264 (PTPVIAFLSVGSKAAGFALAI), 280-300 (FVFTALAVLSMILGNVVALAQ), 306-326 (MLAYSSIAQAGFVMIGLIAGT), 334-354 (IFYLLVYLFMNLCGFTCIILF), 378-398 (LGLSIALLSLGGIPPLAGFFG), 410-432 (GLYWLVLLGLVTTVVSIYYYIRV), and 466-486 (VGLVITLIATSLAGILSNPLF).

This sequence belongs to the complex I subunit 2 family. As to quaternary structure, NDH-1 can be composed of about 15 different subunits; different subcomplexes with different compositions have been identified which probably have different functions.

It is found in the cellular thylakoid membrane. It carries out the reaction a plastoquinone + NADH + (n+1) H(+)(in) = a plastoquinol + NAD(+) + n H(+)(out). It catalyses the reaction a plastoquinone + NADPH + (n+1) H(+)(in) = a plastoquinol + NADP(+) + n H(+)(out). Its function is as follows. NDH-1 shuttles electrons from an unknown electron donor, via FMN and iron-sulfur (Fe-S) centers, to quinones in the respiratory and/or the photosynthetic chain. The immediate electron acceptor for the enzyme in this species is believed to be plastoquinone. Couples the redox reaction to proton translocation, and thus conserves the redox energy in a proton gradient. Cyanobacterial NDH-1 also plays a role in inorganic carbon-concentration. This chain is NAD(P)H-quinone oxidoreductase subunit 2, found in Nostoc punctiforme (strain ATCC 29133 / PCC 73102).